The primary structure comprises 180 residues: Large ribosomal subunit protein uL6 (180 aa).

It belongs to the universal ribosomal protein uL6 family. Part of the 50S ribosomal subunit.

Its function is as follows. This protein binds to the 23S rRNA, and is important in its secondary structure. It is located near the subunit interface in the base of the L7/L12 stalk, and near the tRNA binding site of the peptidyltransferase center. The polypeptide is Large ribosomal subunit protein uL6 (Borreliella burgdorferi (strain ATCC 35210 / DSM 4680 / CIP 102532 / B31) (Borrelia burgdorferi)).